A 154-amino-acid polypeptide reads, in one-letter code: Prefoldin subunit alpha (154 aa).

A disordered region spans residues 119–154 (EKAEVETEMEELEQQAQQMQQQQMQQMMQQQEQEDE). The span at 132–154 (QQAQQMQQQQMQQMMQQQEQEDE) shows a compositional bias: low complexity.

The protein belongs to the prefoldin subunit alpha family. As to quaternary structure, heterohexamer of two alpha and four beta subunits.

The protein localises to the cytoplasm. Molecular chaperone capable of stabilizing a range of proteins. Seems to fulfill an ATP-independent, HSP70-like function in archaeal de novo protein folding. This chain is Prefoldin subunit alpha, found in Haloarcula marismortui (strain ATCC 43049 / DSM 3752 / JCM 8966 / VKM B-1809) (Halobacterium marismortui).